The following is a 668-amino-acid chain: uncharacterized protein (668 aa).

9 helical membrane passes run 182-202 (FAFADFFKTGVFVLSFWGILG), 208-228 (PYSYIFAIGVALWGAFFIQFW), 286-306 (VPLFLISGCILLFLIAIAFIV), 321-341 (IVSLLPAVVFQVLTLPFTFIY), 379-399 (ALFLISYIYGPFAEYFVPHYI), 430-450 (IYFLTNAQVINYITILAVPQL), 499-519 (FVLMFGFLVMFSPIYPLAPIF), 557-577 (LSLLSWLGCITMPSICYFYSS), and 587-607 (VIAAVIGLLSEHLWFLLRMFI).

It localises to the membrane. This is an uncharacterized protein from Schizosaccharomyces pombe (strain 972 / ATCC 24843) (Fission yeast).